Here is a 330-residue protein sequence, read N- to C-terminus: Probable pectinesterase 55 (330 aa).

An N-terminal signal peptide occupies residues Met-1–Ala-24. Asn-38 and Asn-52 each carry an N-linked (GlcNAc...) asparagine glycan. Asp-161 (proton donor) is an active-site residue. The active-site Nucleophile is the Asp-182. Substrate contacts are provided by Arg-243 and Trp-245. Residues Asn-257 and Asn-292 are each glycosylated (N-linked (GlcNAc...) asparagine).

The protein belongs to the pectinesterase family.

Its subcellular location is the secreted. The protein resides in the cell wall. It carries out the reaction [(1-&gt;4)-alpha-D-galacturonosyl methyl ester](n) + n H2O = [(1-&gt;4)-alpha-D-galacturonosyl](n) + n methanol + n H(+). It participates in glycan metabolism; pectin degradation; 2-dehydro-3-deoxy-D-gluconate from pectin: step 1/5. Acts in the modification of cell walls via demethylesterification of cell wall pectin. The chain is Probable pectinesterase 55 (PME55) from Arabidopsis thaliana (Mouse-ear cress).